Reading from the N-terminus, the 397-residue chain is Histidinol-phosphate aminotransferase (397 aa).

The residue at position 247 (Lys-247) is an N6-(pyridoxal phosphate)lysine.

Belongs to the class-II pyridoxal-phosphate-dependent aminotransferase family. Histidinol-phosphate aminotransferase subfamily. As to quaternary structure, homodimer. Pyridoxal 5'-phosphate serves as cofactor.

The enzyme catalyses L-histidinol phosphate + 2-oxoglutarate = 3-(imidazol-4-yl)-2-oxopropyl phosphate + L-glutamate. It participates in amino-acid biosynthesis; L-histidine biosynthesis; L-histidine from 5-phospho-alpha-D-ribose 1-diphosphate: step 7/9. The polypeptide is Histidinol-phosphate aminotransferase (Frankia casuarinae (strain DSM 45818 / CECT 9043 / HFP020203 / CcI3)).